The chain runs to 118 residues: Large ribosomal subunit protein uL18 (118 aa).

The protein belongs to the universal ribosomal protein uL18 family. In terms of assembly, part of the 50S ribosomal subunit; part of the 5S rRNA/L5/L18/L25 subcomplex. Contacts the 5S and 23S rRNAs.

Functionally, this is one of the proteins that bind and probably mediate the attachment of the 5S RNA into the large ribosomal subunit, where it forms part of the central protuberance. The protein is Large ribosomal subunit protein uL18 of Rickettsia conorii (strain ATCC VR-613 / Malish 7).